The primary structure comprises 218 residues: Flagellin B1 (218 aa).

Residues 1 to 12 constitute a propeptide that is removed on maturation; it reads MNIKEFLSNKKG. N-linked (GlcNAc...) asparagine glycans are attached at residues Asn38, Asn71, Asn77, Asn115, and Asn136.

This sequence belongs to the archaeal flagellin family. Post-translationally, N-linked glycans consist of the 779 Da trisaccharide beta-ManNAc(Thr)-(1-4)-beta-GlcNAc3NAcA-(1-3)-beta-GlcNAc.

It is found in the archaeal flagellum. Flagellin is the subunit protein which polymerizes to form the filaments of archaeal flagella. The sequence is that of Flagellin B1 (flaB1) from Methanococcus voltae.